Reading from the N-terminus, the 416-residue chain is Adenylosuccinate synthetase (416 aa).

GTP-binding positions include 13–19 and 41–43; these read GDEGKGK and GHT. Asp14 serves as the catalytic Proton acceptor. 2 residues coordinate Mg(2+): Asp14 and Gly41. IMP contacts are provided by residues 14–17, 39–42, Thr126, Arg140, Gln220, Thr235, and Arg299; these read DEGK and NAGH. His42 acts as the Proton donor in catalysis. 295–301 serves as a coordination point for substrate; sequence TTTGRKR. GTP contacts are provided by residues Arg301, 327 to 329, and 405 to 407; these read KLD and STS.

It belongs to the adenylosuccinate synthetase family. Homodimer. Mg(2+) is required as a cofactor.

The protein resides in the cytoplasm. The enzyme catalyses IMP + L-aspartate + GTP = N(6)-(1,2-dicarboxyethyl)-AMP + GDP + phosphate + 2 H(+). The protein operates within purine metabolism; AMP biosynthesis via de novo pathway; AMP from IMP: step 1/2. In terms of biological role, plays an important role in the de novo pathway of purine nucleotide biosynthesis. Catalyzes the first committed step in the biosynthesis of AMP from IMP. The chain is Adenylosuccinate synthetase from Campylobacter hominis (strain ATCC BAA-381 / DSM 21671 / CCUG 45161 / LMG 19568 / NCTC 13146 / CH001A).